A 390-amino-acid chain; its full sequence is NADH-quinone oxidoreductase subunit D (390 aa).

It belongs to the complex I 49 kDa subunit family. As to quaternary structure, NDH-1 is composed of 14 different subunits. Subunits NuoB, C, D, E, F, and G constitute the peripheral sector of the complex.

It is found in the cell inner membrane. The catalysed reaction is a quinone + NADH + 5 H(+)(in) = a quinol + NAD(+) + 4 H(+)(out). In terms of biological role, NDH-1 shuttles electrons from NADH, via FMN and iron-sulfur (Fe-S) centers, to quinones in the respiratory chain. The immediate electron acceptor for the enzyme in this species is believed to be ubiquinone. Couples the redox reaction to proton translocation (for every two electrons transferred, four hydrogen ions are translocated across the cytoplasmic membrane), and thus conserves the redox energy in a proton gradient. This is NADH-quinone oxidoreductase subunit D from Geotalea uraniireducens (strain Rf4) (Geobacter uraniireducens).